A 266-amino-acid chain; its full sequence is Oxygen-evolving enhancer protein 2-3, chloroplastic (266 aa).

A chloroplast-targeting transit peptide spans 1–80; sequence MASTQCFLHH…VGSKVSPADA (80 aa).

The protein belongs to the PsbP family.

The protein resides in the plastid. It is found in the chloroplast thylakoid membrane. May be involved in the regulation of photosystem II. The chain is Oxygen-evolving enhancer protein 2-3, chloroplastic (PSBP3) from Nicotiana tabacum (Common tobacco).